An 876-amino-acid polypeptide reads, in one-letter code: Beta-glucosidase 1 (876 aa).

The first 17 residues, 1–17 (MLMIVQLLVFALGLAVA), serve as a signal peptide directing secretion. Residues N22, N75, N224, and N267 are each glycosylated (N-linked (GlcNAc...) asparagine). D295 is a catalytic residue. 10 N-linked (GlcNAc...) asparagine glycosylation sites follow: N332, N339, N372, N389, N426, N544, N585, N739, N780, and N790.

Belongs to the glycosyl hydrolase 3 family.

It carries out the reaction Hydrolysis of terminal, non-reducing beta-D-glucosyl residues with release of beta-D-glucose.. The protein operates within glycan metabolism; cellulose degradation. The protein is Beta-glucosidase 1 (BGL1) of Saccharomycopsis fibuligera (Yeast).